A 147-amino-acid chain; its full sequence is Large ribosomal subunit protein uL15 (147 aa).

Residues 1 to 42 (MTIKLHHLRPAPGAKTDKTRVGRGEGSKGKTAGRGTKGTKAR) are disordered. Residues 15-28 (KTDKTRVGRGEGSK) are compositionally biased toward basic and acidic residues.

This sequence belongs to the universal ribosomal protein uL15 family. In terms of assembly, part of the 50S ribosomal subunit.

Functionally, binds to the 23S rRNA. In Nocardia farcinica (strain IFM 10152), this protein is Large ribosomal subunit protein uL15.